The primary structure comprises 202 residues: Probable pathogenesis-related protein CaO19.2336 (202 aa).

The first 20 residues, 1-20, serve as a signal peptide directing secretion; sequence MKTLLFIYLQLLLLLSIIIG. 2 N-linked (GlcNAc...) asparagine glycosylation sites follow: asparagine 58 and asparagine 152. An SCP domain is found at 66–179; the sequence is LKEHNNKRKL…LNALYIVCSY (114 aa).

Belongs to the CRISP family.

It localises to the secreted. Secreted protein that acts as a virulence factor during infections. In Candida albicans (strain SC5314 / ATCC MYA-2876) (Yeast), this protein is Probable pathogenesis-related protein CaO19.2336.